The chain runs to 335 residues: Biotin synthase (335 aa).

In terms of domain architecture, Radical SAM core spans 50-279; it reads ADIQRAALLS…KARVRLSAGR (230 aa). Residues C65, C69, and C72 each contribute to the [4Fe-4S] cluster site. [2Fe-2S] cluster contacts are provided by C110, C142, C202, and R274.

The protein belongs to the radical SAM superfamily. Biotin synthase family. As to quaternary structure, homodimer. Requires [4Fe-4S] cluster as cofactor. [2Fe-2S] cluster is required as a cofactor.

The catalysed reaction is (4R,5S)-dethiobiotin + (sulfur carrier)-SH + 2 reduced [2Fe-2S]-[ferredoxin] + 2 S-adenosyl-L-methionine = (sulfur carrier)-H + biotin + 2 5'-deoxyadenosine + 2 L-methionine + 2 oxidized [2Fe-2S]-[ferredoxin]. It functions in the pathway cofactor biosynthesis; biotin biosynthesis; biotin from 7,8-diaminononanoate: step 2/2. In terms of biological role, catalyzes the conversion of dethiobiotin (DTB) to biotin by the insertion of a sulfur atom into dethiobiotin via a radical-based mechanism. The chain is Biotin synthase from Methylorubrum extorquens (strain CM4 / NCIMB 13688) (Methylobacterium extorquens).